A 209-amino-acid chain; its full sequence is Uracil phosphoribosyltransferase (209 aa).

Residues R79, R104, and 131 to 139 (DPMLATGGS) contribute to the 5-phospho-alpha-D-ribose 1-diphosphate site. Uracil contacts are provided by residues I194 and 199–201 (GDA). D200 contributes to the 5-phospho-alpha-D-ribose 1-diphosphate binding site.

This sequence belongs to the UPRTase family. The cofactor is Mg(2+).

The enzyme catalyses UMP + diphosphate = 5-phospho-alpha-D-ribose 1-diphosphate + uracil. It functions in the pathway pyrimidine metabolism; UMP biosynthesis via salvage pathway; UMP from uracil: step 1/1. Its activity is regulated as follows. Allosterically activated by GTP. Catalyzes the conversion of uracil and 5-phospho-alpha-D-ribose 1-diphosphate (PRPP) to UMP and diphosphate. This chain is Uracil phosphoribosyltransferase, found in Streptococcus uberis (strain ATCC BAA-854 / 0140J).